A 72-amino-acid chain; its full sequence is Dermaseptin AA-3-4 (72 aa).

A signal peptide spans 1-22 (MAFLKKSLFLVLFLGLVSLSIC). Residues 23 to 43 (DEEKRENEDEEEQEDDEQSEE) constitute a propeptide that is removed on maturation. Residues 24–45 (EEKRENEDEEEQEDDEQSEEKR) form a disordered region. Over residues 30 to 41 (EDEEEQEDDEQS) the composition is skewed to acidic residues.

It belongs to the frog skin active peptide (FSAP) family. As to expression, expressed by the skin glands.

Its subcellular location is the secreted. Functionally, possesses a potent antimicrobial activity against Gram-positive and Gram-negative bacteria. Probably acts by disturbing membrane functions with its amphipathic structure. This is Dermaseptin AA-3-4 from Agalychnis annae (Blue-sided leaf frog).